The sequence spans 176 residues: Large ribosomal subunit protein uL6 (176 aa).

Belongs to the universal ribosomal protein uL6 family. In terms of assembly, part of the 50S ribosomal subunit.

In terms of biological role, this protein binds to the 23S rRNA, and is important in its secondary structure. It is located near the subunit interface in the base of the L7/L12 stalk, and near the tRNA binding site of the peptidyltransferase center. In Thiobacillus denitrificans (strain ATCC 25259 / T1), this protein is Large ribosomal subunit protein uL6.